Reading from the N-terminus, the 183-residue chain is uncharacterized protein (183 aa).

A Macro domain is found at 1–182 (MIKVVKGDIT…KALKIVGQGG (182 aa)).

This is an uncharacterized protein from Pyrococcus furiosus (strain ATCC 43587 / DSM 3638 / JCM 8422 / Vc1).